The following is a 70-amino-acid chain: Large ribosomal subunit protein eL38 (70 aa).

This sequence belongs to the eukaryotic ribosomal protein eL38 family.

In Timarcha balearica, this protein is Large ribosomal subunit protein eL38 (RpL38).